A 445-amino-acid chain; its full sequence is MIRLETRFASSFVNSRKFESFLTEAESSRRTLHSFQGKGNEYLGWLNLPKEIKESEIEKIIQVAQRLRDSSEVIVVIGIGGSYLGSRAVLEATLPFFRRSSKGNPEIFFAGHHLESRYLSELMEYLKDRDFSVNVISKSGTTTEPAIAFRLFWELLRKKYGASAASRVVATTDFSKGTLKTFANVEGFETFTIPDNVGGRYSVLTPVGLFPLAAAGIPIRKFILGSQNILKDLHAETDPVRNPATYYSAFRNYFLSEGRHIEILANFNPSLRYISEWWKQLFGESEGKENKGIFPASMDFTTDLHSLGQYVQEGKRILFETVLSPSDVHSNLILRPTPDNLDSLNFLSGNTLGHVNEQARLGTLLAHADGGVPCLELIFPDISPESLGEVMYFFEYSCAISGYSLGVNPFDQPGVDAYKKNMFALLNKVGFEKEGDFLRKRILGN.

Glu284 functions as the Proton donor in the catalytic mechanism. Residues His305 and Lys419 contribute to the active site.

The protein belongs to the GPI family.

The protein localises to the cytoplasm. The enzyme catalyses alpha-D-glucose 6-phosphate = beta-D-fructose 6-phosphate. It participates in carbohydrate biosynthesis; gluconeogenesis. The protein operates within carbohydrate degradation; glycolysis; D-glyceraldehyde 3-phosphate and glycerone phosphate from D-glucose: step 2/4. In terms of biological role, catalyzes the reversible isomerization of glucose-6-phosphate to fructose-6-phosphate. This Leptospira borgpetersenii serovar Hardjo-bovis (strain JB197) protein is Glucose-6-phosphate isomerase.